The following is a 552-amino-acid chain: TBCC domain-containing protein 1 (552 aa).

The C-CAP/cofactor C-like domain occupies Pro-304 to Leu-435.

It belongs to the TBCC family. In terms of tissue distribution, expressed in brain and testis (at protein level).

The protein localises to the cytoplasm. Its subcellular location is the cytoskeleton. It localises to the microtubule organizing center. The protein resides in the centrosome. It is found in the spindle pole. In terms of biological role, plays a role in the regulation of centrosome and Golgi apparatus positioning, with consequences on cell shape and cell migration. In Mus musculus (Mouse), this protein is TBCC domain-containing protein 1 (Tbccd1).